Here is a 476-residue protein sequence, read N- to C-terminus: MCRPTDSDSGPALPSIPHQYWIIHGATYDLASYIKSHPGGDEAILLGRGRDCTELFEQYHVLNNKHLRVLERFRVTLPAAKVATNNLKEDMVSTISAFEGEEADAAAVVGIQQPAAPARVAHQSDPFYEDIKAMVRAHGNTKMSAPFVILHCLHVVGLIWSMKLWWQGAFISAFILPYFLWVLCAAMVHDGGHFAHSKRPLVNKLLTHTGALFTNSVGCWYLQHNILHHSYTNLVGKDGDLDSHHPYMRIHPEQSMLPANIHHAVRFFSHLIMYNFAHIGLTMISPLSYFRGVAAQKKGTADAKQAQDAQTVAQYHSTVMLQLVTVGAFYITPFLRFDFSRALLLTLLPTFMMSVAFMVIAQVSHIQMDAEAPSADLEKLHWARRMALTSVDYSQESTLWAYLTIGLNMQSLHHIVPGVSYSQLPRLYPAYRAICEKHGIKLLERRNLAHAFWTHLQTLWVLSKTHSFVEVARKLA.

The Cytochrome b5 heme-binding domain occupies 10 to 75; it reads GPALPSIPHQ…HLRVLERFRV (66 aa). 2 residues coordinate heme: His-37 and His-60. 2 consecutive transmembrane segments (helical) span residues 146-166 and 168-188; these read PFVILHCLHVVGLIWSMKLWW and GAFISAFILPYFLWVLCAAMV. The Histidine box-1 motif lies at 189-193; the sequence is HDGGH. Residues 224–229 carry the Histidine box-2 motif; that stretch reads HNILHH. The next 3 membrane-spanning stretches (helical) occupy residues 267-287, 315-335, and 343-363; these read FFSHLIMYNFAHIGLTMISPL, YHSTVMLQLVTVGAFYITPFL, and LLLTLLPTFMMSVAFMVIAQV. The Histidine box-3 motif lies at 410-414; sequence QSLHH.

The protein belongs to the fatty acid desaturase type 1 family.

The protein localises to the membrane. It catalyses the reaction a (9Z,12Z)-octadecadienoyl-containing glycerolipid + 2 Fe(II)-[cytochrome b5] + O2 + 2 H(+) = a (5Z,9Z,12Z)-octadecatrienoyl-containing glycerolipid + 2 Fe(III)-[cytochrome b5] + 2 H2O. The catalysed reaction is (9Z,12Z,15Z)-octadecatrienoyl-containing glycerolipid + 2 Fe(II)-[cytochrome b5] + O2 + 2 H(+) = a (5Z,9Z,12Z,15Z)-octadecatetraenoyl-containing glycerolipid + 2 Fe(III)-[cytochrome b5] + 2 H2O. The protein operates within lipid metabolism; polyunsaturated fatty acid biosynthesis. Front-end desaturase having a omega-13 desaturase activity for omega-9 unsaturated C18/C20 fatty acids. Strong substrate preferences for linoleic acid and alpha-linolenic acid for the production of pinolenic and coniferonic acids respectively. No desaturase activity for dihomo gamma-linolenic acid and eicosatertraenoic acid. This is Acyl-lipid omega-13 desaturase from Chlamydomonas reinhardtii (Chlamydomonas smithii).